We begin with the raw amino-acid sequence, 228 residues long: Urease accessory protein UreF 1 (228 aa).

It belongs to the UreF family. As to quaternary structure, ureD, UreF and UreG form a complex that acts as a GTP-hydrolysis-dependent molecular chaperone, activating the urease apoprotein by helping to assemble the nickel containing metallocenter of UreC. The UreE protein probably delivers the nickel.

The protein resides in the cytoplasm. Functionally, required for maturation of urease via the functional incorporation of the urease nickel metallocenter. Disruption of the ure1 gene cluster suggests that it protects brucellae during their passage through the stomach. The major route of infection in human brucellosis is oral. This is Urease accessory protein UreF 1 from Brucella abortus (strain 2308).